Consider the following 108-residue polypeptide: Thiosulfate sulfurtransferase GlpE (108 aa).

Residues 17–105 enclose the Rhodanese domain; that stretch reads QEKEAVLVDI…WQRQFPAEVA (89 aa). Catalysis depends on Cys65, which acts as the Cysteine persulfide intermediate.

The protein belongs to the GlpE family.

The protein localises to the cytoplasm. The catalysed reaction is thiosulfate + hydrogen cyanide = thiocyanate + sulfite + 2 H(+). It carries out the reaction thiosulfate + [thioredoxin]-dithiol = [thioredoxin]-disulfide + hydrogen sulfide + sulfite + 2 H(+). Transferase that catalyzes the transfer of sulfur from thiosulfate to thiophilic acceptors such as cyanide or dithiols. May function in a CysM-independent thiosulfate assimilation pathway by catalyzing the conversion of thiosulfate to sulfite, which can then be used for L-cysteine biosynthesis. In Escherichia coli O157:H7, this protein is Thiosulfate sulfurtransferase GlpE.